We begin with the raw amino-acid sequence, 195 residues long: MELNTHNAEILLSAANKSHYPQDELPEIALAGRSNVGKSSFINTMLNRKNLARTSGKPGKTQLLNFFNIDDKMRFVDVPGYGYARVSKKEREKWGRMIEEYLTTRENLRAVVSLVDLRHDPSADDVQMYEFLKYYEIPVIIVATKADKIPRGKWNKHESAIKKKLNFDPSDDFILFSSVSKEGMDEAWDAILEKL.

Positions 24-195 (ELPEIALAGR…EAWDAILEKL (172 aa)) constitute an EngB-type G domain. GTP contacts are provided by residues 32–39 (GRSNVGKS), 59–63 (GKTQL), 77–80 (DVPG), 144–147 (TKAD), and 176–178 (FSS). Positions 39 and 61 each coordinate Mg(2+).

It belongs to the TRAFAC class TrmE-Era-EngA-EngB-Septin-like GTPase superfamily. EngB GTPase family. It depends on Mg(2+) as a cofactor.

In terms of biological role, necessary for normal cell division and for the maintenance of normal septation. The protein is Probable GTP-binding protein EngB of Streptococcus pneumoniae (strain Hungary19A-6).